The following is a 41-amino-acid chain: MKVLSSLKSAKNRHPDCQIVKRRGRLYVICKSNPRFKAVQR.

Belongs to the bacterial ribosomal protein bL36 family.

This is Large ribosomal subunit protein bL36A from Vibrio cholerae serotype O1 (strain ATCC 39541 / Classical Ogawa 395 / O395).